The sequence spans 221 residues: Bcl-2-related ovarian killer protein homolog A (221 aa).

The BH4 motif lies at K32–H44. The BH3 motif lies at V64–P80. The short motif at E110–G140 is the BH1 element. The BH2 signature appears at W173 to V187. Residues W198–L218 form a helical membrane-spanning segment.

Belongs to the Bcl-2 family. In terms of tissue distribution, strongest expression in ovary and eye, weaker expression in gut, kidney and brain. Little expression in liver or heart.

Its subcellular location is the membrane. Its function is as follows. May play a role in apoptosis. Does not appear to show pro-apoptotic activity when expressed ectopically in early embryos. The sequence is that of Bcl-2-related ovarian killer protein homolog A from Danio rerio (Zebrafish).